A 935-amino-acid polypeptide reads, in one-letter code: Isoleucine--tRNA ligase (935 aa).

Residues 58 to 68 (PYANGSIHVGH) carry the 'HIGH' region motif. Glu558 is a binding site for L-isoleucyl-5'-AMP. Residues 599 to 603 (KMSKS) carry the 'KMSKS' region motif. An ATP-binding site is contributed by Lys602. Zn(2+) is bound by residues Cys897, Cys900, Cys917, and Cys920.

The protein belongs to the class-I aminoacyl-tRNA synthetase family. IleS type 1 subfamily. In terms of assembly, monomer. Requires Zn(2+) as cofactor.

It localises to the cytoplasm. It carries out the reaction tRNA(Ile) + L-isoleucine + ATP = L-isoleucyl-tRNA(Ile) + AMP + diphosphate. Its function is as follows. Catalyzes the attachment of isoleucine to tRNA(Ile). As IleRS can inadvertently accommodate and process structurally similar amino acids such as valine, to avoid such errors it has two additional distinct tRNA(Ile)-dependent editing activities. One activity is designated as 'pretransfer' editing and involves the hydrolysis of activated Val-AMP. The other activity is designated 'posttransfer' editing and involves deacylation of mischarged Val-tRNA(Ile). In Francisella tularensis subsp. tularensis (strain SCHU S4 / Schu 4), this protein is Isoleucine--tRNA ligase.